We begin with the raw amino-acid sequence, 494 residues long: Keratin, type I cytoskeletal 12 (494 aa).

The span at 1–12 (MDLSNNTMSLSV) shows a compositional bias: polar residues. The disordered stretch occupies residues 1 to 32 (MDLSNNTMSLSVRTPGLSRRLSSQSVIGRPRG). The segment at 1-124 (MDLSNNTMSL…GNDGGLLSGS (124 aa)) is head. The tract at residues 125 to 160 (EKETMQNLNDRLASYLDKVRALEEANTELENKIREW) is coil 1A. An IF rod domain is found at 125 to 440 (EKETMQNLND…RLLDGEAQGD (316 aa)). A linker 1 region spans residues 164 to 182 (RGTGTADASQSDYSKYYPL). Residues 183–274 (IEDLRNKIIS…KNHEDELQSF (92 aa)) form a coil 1B region. A linker 12 region spans residues 275 to 297 (RVGGPGEVSVEMDAAPGVDLTRL). A coil 2 region spans residues 298–435 (LNDMRAQYET…IETYRRLLDG (138 aa)). The tail stretch occupies residues 436-494 (EAQGDGLEESLFVTDSKSQAQSTDSSKDPTKTRKIKTVVQEMVNGEVVSSQVQEIEELM). Residues 446 to 468 (LFVTDSKSQAQSTDSSKDPTKTR) form a disordered region. The segment covering 448–459 (VTDSKSQAQSTD) has biased composition (polar residues).

It belongs to the intermediate filament family. Heterotetramer of two type I and two type II keratins. Keratin-3 associates with keratin-12. Expressed in the corneal epithelium (at protein level).

Functionally, involved in corneal epithelium organization, integrity and corneal keratin expression. The polypeptide is Keratin, type I cytoskeletal 12 (KRT12) (Homo sapiens (Human)).